We begin with the raw amino-acid sequence, 456 residues long: Bifunctional protein GlmU (456 aa).

Positions Met1–Arg229 are pyrophosphorylase. UDP-N-acetyl-alpha-D-glucosamine is bound by residues Leu11–Gly14, Lys25, Gln76, Gly81–Thr82, Tyr103–Asp105, Gly140, Glu154, Asn169, and Asn227. Residue Asp105 participates in Mg(2+) binding. Asn227 is a Mg(2+) binding site. Positions Leu230–Ala250 are linker. The tract at residues Gly251–Lys456 is N-acetyltransferase. 2 residues coordinate UDP-N-acetyl-alpha-D-glucosamine: Arg333 and Lys351. His363 functions as the Proton acceptor in the catalytic mechanism. UDP-N-acetyl-alpha-D-glucosamine-binding residues include Tyr366 and Asn377. Residues Ala380, Asn386–Tyr387, Ser405, Ala423, and Arg440 each bind acetyl-CoA.

The protein in the N-terminal section; belongs to the N-acetylglucosamine-1-phosphate uridyltransferase family. This sequence in the C-terminal section; belongs to the transferase hexapeptide repeat family. Homotrimer. The cofactor is Mg(2+).

It is found in the cytoplasm. The enzyme catalyses alpha-D-glucosamine 1-phosphate + acetyl-CoA = N-acetyl-alpha-D-glucosamine 1-phosphate + CoA + H(+). It catalyses the reaction N-acetyl-alpha-D-glucosamine 1-phosphate + UTP + H(+) = UDP-N-acetyl-alpha-D-glucosamine + diphosphate. The protein operates within nucleotide-sugar biosynthesis; UDP-N-acetyl-alpha-D-glucosamine biosynthesis; N-acetyl-alpha-D-glucosamine 1-phosphate from alpha-D-glucosamine 6-phosphate (route II): step 2/2. It participates in nucleotide-sugar biosynthesis; UDP-N-acetyl-alpha-D-glucosamine biosynthesis; UDP-N-acetyl-alpha-D-glucosamine from N-acetyl-alpha-D-glucosamine 1-phosphate: step 1/1. It functions in the pathway bacterial outer membrane biogenesis; LPS lipid A biosynthesis. Catalyzes the last two sequential reactions in the de novo biosynthetic pathway for UDP-N-acetylglucosamine (UDP-GlcNAc). The C-terminal domain catalyzes the transfer of acetyl group from acetyl coenzyme A to glucosamine-1-phosphate (GlcN-1-P) to produce N-acetylglucosamine-1-phosphate (GlcNAc-1-P), which is converted into UDP-GlcNAc by the transfer of uridine 5-monophosphate (from uridine 5-triphosphate), a reaction catalyzed by the N-terminal domain. This chain is Bifunctional protein GlmU, found in Cronobacter sakazakii (strain ATCC BAA-894) (Enterobacter sakazakii).